A 251-amino-acid polypeptide reads, in one-letter code: Triosephosphate isomerase 1 (251 aa).

9-11 (NWK) is a substrate binding site. Residue His95 is the Electrophile of the active site. Catalysis depends on Glu167, which acts as the Proton acceptor. Substrate is bound by residues Gly173, Ser213, and 234–235 (GG).

This sequence belongs to the triosephosphate isomerase family. In terms of assembly, homodimer.

The protein resides in the cytoplasm. It catalyses the reaction D-glyceraldehyde 3-phosphate = dihydroxyacetone phosphate. The protein operates within carbohydrate biosynthesis; gluconeogenesis. It functions in the pathway carbohydrate degradation; glycolysis; D-glyceraldehyde 3-phosphate from glycerone phosphate: step 1/1. Its function is as follows. Involved in the gluconeogenesis. Catalyzes stereospecifically the conversion of dihydroxyacetone phosphate (DHAP) to D-glyceraldehyde-3-phosphate (G3P). This is Triosephosphate isomerase 1 from Listeria innocua serovar 6a (strain ATCC BAA-680 / CLIP 11262).